Consider the following 806-residue polypeptide: Leucine--tRNA ligase (806 aa).

Residues P40 to H51 carry the 'HIGH' region motif. The 'KMSKS' region signature appears at K578–S582. K581 provides a ligand contact to ATP.

The protein belongs to the class-I aminoacyl-tRNA synthetase family.

It localises to the cytoplasm. It carries out the reaction tRNA(Leu) + L-leucine + ATP = L-leucyl-tRNA(Leu) + AMP + diphosphate. This Staphylococcus aureus (strain MSSA476) protein is Leucine--tRNA ligase.